The primary structure comprises 141 residues: Hemoglobin subunit zeta (141 aa).

Position 1 is an N-acetylserine (serine 1). In terms of domain architecture, Globin spans 1–141 (SLTKAERTII…VSGVLTEKYR (141 aa)). Threonine 28 is subject to Phosphothreonine. Residue serine 52 is modified to Phosphoserine. Heme b is bound at residue histidine 58. Serine 72 is subject to Phosphoserine. Histidine 87 serves as a coordination point for heme b.

This sequence belongs to the globin family. As to quaternary structure, heterotetramer of two zeta chains and two epsilon chains.

In terms of biological role, the zeta chain is an alpha-type chain of mammalian embryonic hemoglobin. This chain is Hemoglobin subunit zeta, found in Sus scrofa (Pig).